A 491-amino-acid polypeptide reads, in one-letter code: Limb region 1 homolog-like protein (491 aa).

Topologically, residues 1 to 20 are extracellular; sequence METEDVTVREQIFHDRVRET. A helical transmembrane segment spans residues 21–41; that stretch reads IICVLLFICLYILSHFILTHF. Residues 42–59 are Cytoplasmic-facing; it reads KKSAEFVTDDIEDATVNK. A helical transmembrane segment spans residues 60 to 80; that stretch reads IALWLCTFTLSVAVCAVLLLP. Topologically, residues 81-111 are extracellular; that stretch reads ISILSNEVLLTFPHSYYMQWLNGSLIRGLWN. Residues 112–132 traverse the membrane as a helical segment; that stretch reads LVFLFSNLSLVFLMPFAYFFT. Topologically, residues 133–152 are cytoplasmic; sequence ESEGFAGSKKGVMARVYETA. A helical transmembrane segment spans residues 153–173; that stretch reads VMLLLLSLLVLGIVWVASALL. The Extracellular portion of the chain corresponds to 174–192; the sequence is HHNTARESLYDLWEYYLPY. A helical membrane pass occupies residues 193 to 213; the sequence is LYSGISLFGVLLLLLCTPFGL. At 214–292 the chain is on the cytoplasmic side; sequence SRMFSVTGSL…RKRASPWQRN (79 aa). A helical membrane pass occupies residues 293–313; sequence LVYPVAMLLLLALTAVSVLMV. Over 314–346 the chain is Extracellular; the sequence is CFHVLELLFDESAMPRGMEDPHLGLASFSMLGS. The helical transmembrane segment at 347–367 threads the bilayer; the sequence is LGAAVQVVIILYLMVSSVVGF. The Cytoplasmic segment spans residues 368-384; sequence YSSPLFTGLLPRAQDTT. The helical transmembrane segment at 385-405 threads the bilayer; it reads LTQIIGNCVSLLILSSALPVF. At 406–427 the chain is on the extracellular side; that stretch reads SRTLGITKFDLLGDFGRHDWLG. Residues 428–448 traverse the membrane as a helical segment; it reads SFHIVFLYNMLFAGLTSACLI. Over 449–491 the chain is Cytoplasmic; that stretch reads NTVTWALQRELIRAFGLHRLPLTVSRSTIPLKLLLANGLSKIH.

It belongs to the LIMR family. In terms of assembly, dimer. Can also form higher oligomers.

Its subcellular location is the cell membrane. It localises to the endoplasmic reticulum membrane. Functionally, may play a role in lymphocyte development by negatively regulating the canonical Wnt signaling pathway. May act as a LCN1 receptor. This chain is Limb region 1 homolog-like protein (lmbr1l), found in Danio rerio (Zebrafish).